Consider the following 146-residue polypeptide: MNIIAQLEAEQCAKIAAKRQLPAFQPGDTVRVMVRVTEGTRTRVQAYEGVCIARSGGGLNETFTVRKISYGEGVERVFPVYSPLIEGVELVRRGKVRRAKLYYLRNLRGKAARITEKKDQRKKSAKIVEKEQEALVRVEAPAHATE.

Belongs to the bacterial ribosomal protein bL19 family.

This protein is located at the 30S-50S ribosomal subunit interface and may play a role in the structure and function of the aminoacyl-tRNA binding site. The polypeptide is Large ribosomal subunit protein bL19 (Bartonella henselae (strain ATCC 49882 / DSM 28221 / CCUG 30454 / Houston 1) (Rochalimaea henselae)).